We begin with the raw amino-acid sequence, 180 residues long: uncharacterized protein (180 aa).

The signal sequence occupies residues 1–21 (MKQCIAFMAILALSLSAISEA). The disordered stretch occupies residues 23–81 (GGRGVRSSGYSRPVATKPAPAPKQTQTQQQSQQPDATFGQQNMQNTATNTPNNPNNRLA). Residues 27–78 (VRSSGYSRPVATKPAPAPKQTQTQQQSQQPDATFGQQNMQNTATNTPNNPNN) show a composition bias toward low complexity.

This is an uncharacterized protein from Pasteurella multocida (strain Pm70).